The sequence spans 343 residues: Galactoside alpha-(1,2)-fucosyltransferase 2 (343 aa).

Topologically, residues 1 to 14 are cytoplasmic; that stretch reads MLVVQMPFSFPMAH. The helical; Signal-anchor for type II membrane protein transmembrane segment at 15–28 threads the bilayer; the sequence is FILFVFTVSTIFHV. Residues 29–343 lie on the Lumenal side of the membrane; sequence QQRLAKIQAM…AADLSPLLKH (315 aa). Asn188, Asn282, and Asn308 each carry an N-linked (GlcNAc...) asparagine glycan.

It belongs to the glycosyltransferase 11 family.

Its subcellular location is the golgi apparatus. It localises to the golgi stack membrane. It catalyses the reaction a beta-D-galactosyl-(1-&gt;3)-N-acetyl-beta-D-glucosaminyl derivative + GDP-beta-L-fucose = an alpha-L-Fuc-(1-&gt;2)-beta-D-Gal-(1-&gt;3)-beta-D-GlcNAc derivative + GDP + H(+). The enzyme catalyses a beta-D-galactosyl-(1-&gt;4)-N-acetyl-beta-D-glucosaminyl derivative + GDP-beta-L-fucose = an alpha-L-Fuc-(1-&gt;2)-beta-D-Gal-(1-&gt;4)-beta-D-GlcNAc derivative + GDP + H(+). It carries out the reaction a neolactoside nLc4Cer + GDP-beta-L-fucose = a neolactoside IV(2)-alpha-Fuc-nLc4Cer + GDP + H(+). The catalysed reaction is a neolactoside nLc4Cer(d18:1(4E)) + GDP-beta-L-fucose = a neolactoside IV(2)-alpha-Fuc-nLc4Cer(d18:1(4E)) + GDP + H(+). It catalyses the reaction a ganglioside GM1 + GDP-beta-L-fucose = a ganglioside Fuc-GM1 + GDP + H(+). The enzyme catalyses a ganglioside GA1 + GDP-beta-L-fucose = a ganglioside Fuc-GA1 + GDP + H(+). It carries out the reaction Lc4Cer + GDP-beta-L-fucose = alpha-L-fucosyl-(1-&gt;2)-beta-D-galactosyl-(1-&gt;3)-N-acetyl-beta-D-glucosaminyl-(1-&gt;3)-beta-D-galactosyl-(1-&gt;4)-beta-D-glucosyl-(1&lt;-&gt;1')-ceramide + GDP + H(+). The catalysed reaction is a beta-D-Gal-(1-&gt;3)-beta-D-GlcNAc-(1-&gt;3)-beta-D-Gal-(1-&gt;4)-beta-D-Glc-(1&lt;-&gt;1')-Cer(d18:1(4E)) + GDP-beta-L-fucose = alpha-L-fucosyl-(1-&gt;2)- beta-D-galactosyl-(1-&gt;3)-N-acetyl-beta-D-glucosaminyl-(1-&gt;3)-beta-D-galactosyl-(1-&gt;4)-beta-D-glucosyl-(1&lt;-&gt;1')-N-acylsphing-4-enine + GDP + H(+). It catalyses the reaction a ganglioside GD1b + GDP-beta-L-fucose = a ganglioside Fuc-GD1b + GDP + H(+). The enzyme catalyses a ganglioside GM1 (d18:1(4E)) + GDP-beta-L-fucose = a ganglioside Fuc-GM1 (d18:1(4E)) + GDP + H(+). It carries out the reaction a globoside GalGb4Cer (d18:1(4E)) + GDP-beta-L-fucose = a globoside Globo-H (d18:1(4E)) + GDP + H(+). The catalysed reaction is a lactoside III(4)-a-Fuc-Lc4Cer + GDP-beta-L-fucose = a lactoside IV(2),III(4)-a-[Fuc]2-Lc4Cer + GDP + H(+). It catalyses the reaction beta-D-galactosyl-(1-&gt;3)-N-acetyl-D-galactosamine + GDP-beta-L-fucose = alpha-L-fucosyl-(1-&gt;2)-beta-D-galactosyl-(1-&gt;3)-N-acetyl-D-galactosamine + GDP + H(+). Its pathway is protein modification; protein glycosylation. In terms of biological role, catalyzes the transfer of L-fucose, from a guanosine diphosphate-beta-L-fucose, to the terminal galactose on both O- and N-linked glycans chains of cell surface glycoproteins and glycolipids and the resulting epitope regulates several processes such as cell-cell interaction including host-microbe interaction, cell surface expression and cell proliferation. Preferentially fucosylates gangliosides GA1 and GM1 in the antrum, cecum and colon and in the female reproductive organs. Fucosylated host glycoproteins or glycolipids mediate interaction with intestinal microbiota influencing its composition. Creates a soluble precursor oligosaccharide FuC-alpha ((1,2)Galbeta-) called the H antigen which is an essential substrate for the final step in the soluble ABO blood group antigen synthesis pathway. This Hylobates lar (Lar gibbon) protein is Galactoside alpha-(1,2)-fucosyltransferase 2.